Here is a 124-residue protein sequence, read N- to C-terminus: Small ribosomal subunit protein uS12 (124 aa).

A 3-methylthioaspartic acid modification is found at aspartate 89. Positions 104-124 (TAGVENRKQSRSKYGAKRPKK) are disordered. The span at 112–124 (QSRSKYGAKRPKK) shows a compositional bias: basic residues.

Belongs to the universal ribosomal protein uS12 family. Part of the 30S ribosomal subunit. Contacts proteins S8 and S17. May interact with IF1 in the 30S initiation complex.

With S4 and S5 plays an important role in translational accuracy. Its function is as follows. Interacts with and stabilizes bases of the 16S rRNA that are involved in tRNA selection in the A site and with the mRNA backbone. Located at the interface of the 30S and 50S subunits, it traverses the body of the 30S subunit contacting proteins on the other side and probably holding the rRNA structure together. The combined cluster of proteins S8, S12 and S17 appears to hold together the shoulder and platform of the 30S subunit. The protein is Small ribosomal subunit protein uS12 of Pseudothermotoga lettingae (strain ATCC BAA-301 / DSM 14385 / NBRC 107922 / TMO) (Thermotoga lettingae).